A 147-amino-acid chain; its full sequence is VVCVICLEKPKYRCPACRVPYCSVACFRKHKEQCNPEARPVEKKIRSALPTKTXKPVENKDDDDSIADFLNSDEEEDRVSLQNLKNLGKSATLRSLLLNPHLRQLMVNLDQGEDKAKLMRAYMQEPLFVEFADCCLGIVEPSQNEDS.

Residues Cys-3, Cys-6, Cys-14, Cys-17, Cys-22, Cys-26, His-30, and Cys-34 each coordinate Zn(2+). The HIT-type zinc-finger motif lies at 3 to 34 (CVICLEKPKYRCPACRVPYCSVACFRKHKEQC). The tract at residues 45–67 (IRSALPTKTXKPVENKDDDDSIA) is disordered. Phosphoserine is present on Ser-72.

As to quaternary structure, thyroid receptor interacting proteins (TRIPs) specifically interact with the ligand binding domain of the thyroid receptor (TR). Requires the presence of thyroid hormone for its interaction. Interacts with NUFIP1. Interacts (via HIT-type zinc finger) with the RUVBL1/RUVBL2 complex in the presence of ADP.

The protein resides in the cytoplasm. It is found in the nucleus. In Macaca mulatta (Rhesus macaque), this protein is Zinc finger HIT domain-containing protein 3 (ZNHIT3).